The following is a 188-amino-acid chain: Elongation factor P (188 aa).

The protein belongs to the elongation factor P family.

It is found in the cytoplasm. It participates in protein biosynthesis; polypeptide chain elongation. Functionally, involved in peptide bond synthesis. Stimulates efficient translation and peptide-bond synthesis on native or reconstituted 70S ribosomes in vitro. Probably functions indirectly by altering the affinity of the ribosome for aminoacyl-tRNA, thus increasing their reactivity as acceptors for peptidyl transferase. The polypeptide is Elongation factor P (Aeromonas hydrophila subsp. hydrophila (strain ATCC 7966 / DSM 30187 / BCRC 13018 / CCUG 14551 / JCM 1027 / KCTC 2358 / NCIMB 9240 / NCTC 8049)).